Reading from the N-terminus, the 297-residue chain is Formamidopyrimidine-DNA glycosylase (297 aa).

Residue proline 2 is the Schiff-base intermediate with DNA of the active site. The active-site Proton donor is the glutamate 3. The Proton donor; for beta-elimination activity role is filled by lysine 61. Positions 120 and 176 each coordinate DNA. The FPG-type zinc finger occupies 262–296; that stretch reads HVYGRQGQPCDRCGTAIVRESFMNRGSHFCPRCQR. Arginine 286 serves as the catalytic Proton donor; for delta-elimination activity.

It belongs to the FPG family. As to quaternary structure, monomer. Requires Zn(2+) as cofactor.

The enzyme catalyses Hydrolysis of DNA containing ring-opened 7-methylguanine residues, releasing 2,6-diamino-4-hydroxy-5-(N-methyl)formamidopyrimidine.. It carries out the reaction 2'-deoxyribonucleotide-(2'-deoxyribose 5'-phosphate)-2'-deoxyribonucleotide-DNA = a 3'-end 2'-deoxyribonucleotide-(2,3-dehydro-2,3-deoxyribose 5'-phosphate)-DNA + a 5'-end 5'-phospho-2'-deoxyribonucleoside-DNA + H(+). Its function is as follows. Involved in base excision repair of DNA damaged by oxidation or by mutagenic agents. Acts as a DNA glycosylase that recognizes and removes damaged bases. Has a preference for oxidized purines, such as 7,8-dihydro-8-oxoguanine (8-oxoG). Has AP (apurinic/apyrimidinic) lyase activity and introduces nicks in the DNA strand. Cleaves the DNA backbone by beta-delta elimination to generate a single-strand break at the site of the removed base with both 3'- and 5'-phosphates. The polypeptide is Formamidopyrimidine-DNA glycosylase (Leifsonia xyli subsp. xyli (strain CTCB07)).